The following is a 498-amino-acid chain: Hexokinase-1 (498 aa).

The Hexokinase domain occupies 39-492 (AAAQRVVAEL…SGLGAALVAA (454 aa)). The hexokinase small subdomain stretch occupies residues 95-233 (TGGEEGSYYA…GLDMRVSALI (139 aa)). ADP-binding residues include Gly-109, Thr-110, and Asn-111. The D-glucose site is built by Thr-199, Lys-200, Asn-234, and Asp-235. Residues 234-481 (NDTVGTLAAG…ERVVVKLASD (248 aa)) are hexokinase large subdomain. Thr-258 serves as a coordination point for ADP. D-glucose-binding residues include Asn-261, Glu-290, and Glu-321. Gly-446 is an ADP binding site.

Belongs to the hexokinase family. In terms of tissue distribution, highly expressed in senescent leaves.

It catalyses the reaction a D-hexose + ATP = a D-hexose 6-phosphate + ADP + H(+). The enzyme catalyses D-fructose + ATP = D-fructose 6-phosphate + ADP + H(+). It carries out the reaction D-glucose + ATP = D-glucose 6-phosphate + ADP + H(+). It functions in the pathway carbohydrate metabolism; hexose metabolism. It participates in carbohydrate degradation; glycolysis; D-glyceraldehyde 3-phosphate and glycerone phosphate from D-glucose: step 1/4. Its function is as follows. Fructose and glucose phosphorylating enzyme. Acts as a positive regulator of leaf senescence by mediating glucose accumulation and inducing an increase in reactive oxygen species (ROS). This Oryza sativa subsp. japonica (Rice) protein is Hexokinase-1 (HXK1).